Consider the following 860-residue polypeptide: Leucine--tRNA ligase (860 aa).

A 'HIGH' region motif is present at residues 42 to 52; sequence PYPSGRLHMGH. Positions 619-623 match the 'KMSKS' region motif; sequence KMSKS. Residue lysine 622 participates in ATP binding.

The protein belongs to the class-I aminoacyl-tRNA synthetase family.

The protein localises to the cytoplasm. The enzyme catalyses tRNA(Leu) + L-leucine + ATP = L-leucyl-tRNA(Leu) + AMP + diphosphate. The polypeptide is Leucine--tRNA ligase (Photorhabdus laumondii subsp. laumondii (strain DSM 15139 / CIP 105565 / TT01) (Photorhabdus luminescens subsp. laumondii)).